A 426-amino-acid chain; its full sequence is 3-phosphoshikimate 1-carboxyvinyltransferase (426 aa).

The 3-phosphoshikimate site is built by lysine 22, serine 23, and arginine 27. Lysine 22 contributes to the phosphoenolpyruvate binding site. Phosphoenolpyruvate-binding residues include glycine 96 and arginine 124. 3-phosphoshikimate is bound by residues serine 170, serine 171, glutamine 172, serine 198, aspartate 314, asparagine 337, and lysine 341. Glutamine 172 contacts phosphoenolpyruvate. The active-site Proton acceptor is the aspartate 314. 3 residues coordinate phosphoenolpyruvate: arginine 345, arginine 387, and lysine 412.

The protein belongs to the EPSP synthase family. As to quaternary structure, monomer.

The protein resides in the cytoplasm. The enzyme catalyses 3-phosphoshikimate + phosphoenolpyruvate = 5-O-(1-carboxyvinyl)-3-phosphoshikimate + phosphate. It participates in metabolic intermediate biosynthesis; chorismate biosynthesis; chorismate from D-erythrose 4-phosphate and phosphoenolpyruvate: step 6/7. Its function is as follows. Catalyzes the transfer of the enolpyruvyl moiety of phosphoenolpyruvate (PEP) to the 5-hydroxyl of shikimate-3-phosphate (S3P) to produce enolpyruvyl shikimate-3-phosphate and inorganic phosphate. The chain is 3-phosphoshikimate 1-carboxyvinyltransferase from Vibrio campbellii (strain ATCC BAA-1116).